A 120-amino-acid chain; its full sequence is Large ribosomal subunit protein eL18 (120 aa).

Belongs to the eukaryotic ribosomal protein eL18 family.

The protein is Large ribosomal subunit protein eL18 of Pyrococcus abyssi (strain GE5 / Orsay).